A 175-amino-acid polypeptide reads, in one-letter code: Gamma-crystallin B (175 aa).

Beta/gamma crystallin 'Greek key' domains follow at residues 2–40 (GKITFFEDRSFQGRCYECSSDCPNLQTYFSRCNSVRVDS) and 41–83 (GCWM…CLIP). The connecting peptide stretch occupies residues 84-88 (QHSGT). 2 consecutive Beta/gamma crystallin 'Greek key' domains span residues 89-129 (YRMR…NVME) and 130-172 (GCWV…RRVM).

It belongs to the beta/gamma-crystallin family.

Crystallins are the dominant structural components of the vertebrate eye lens. This chain is Gamma-crystallin B (Crygb), found in Mus musculus (Mouse).